The chain runs to 355 residues: Uroporphyrinogen decarboxylase (355 aa).

Substrate-binding positions include 27 to 31 (RQAGR), aspartate 78, tyrosine 155, threonine 210, and histidine 328.

This sequence belongs to the uroporphyrinogen decarboxylase family. Homodimer.

Its subcellular location is the cytoplasm. The enzyme catalyses uroporphyrinogen III + 4 H(+) = coproporphyrinogen III + 4 CO2. It participates in porphyrin-containing compound metabolism; protoporphyrin-IX biosynthesis; coproporphyrinogen-III from 5-aminolevulinate: step 4/4. In terms of biological role, catalyzes the decarboxylation of four acetate groups of uroporphyrinogen-III to yield coproporphyrinogen-III. The sequence is that of Uroporphyrinogen decarboxylase from Pseudomonas fluorescens (strain SBW25).